The primary structure comprises 466 residues: Adenosylhomocysteinase (466 aa).

T57, D132, and E192 together coordinate substrate. 193–195 lines the NAD(+) pocket; it reads TTT. Substrate contacts are provided by K222 and D226. Residues N227, 256–261, E279, N314, 335–337, and N380 contribute to the NAD(+) site; these read GYGDVG and IGH.

Belongs to the adenosylhomocysteinase family. NAD(+) is required as a cofactor.

The protein localises to the cytoplasm. It catalyses the reaction S-adenosyl-L-homocysteine + H2O = L-homocysteine + adenosine. Its pathway is amino-acid biosynthesis; L-homocysteine biosynthesis; L-homocysteine from S-adenosyl-L-homocysteine: step 1/1. May play a key role in the regulation of the intracellular concentration of adenosylhomocysteine. The protein is Adenosylhomocysteinase of Rhizobium etli (strain CIAT 652).